We begin with the raw amino-acid sequence, 135 residues long: Sex-regulated protein janus-A (135 aa).

K37 lines the substrate pocket. H63 serves as the catalytic Proton acceptor. A substrate-binding site is contributed by 104 to 106 (SQG).

The protein belongs to the janus family.

Functionally, janA and janB regulate somatic sex differentiation. In Drosophila erecta (Fruit fly), this protein is Sex-regulated protein janus-A (janA).